A 309-amino-acid polypeptide reads, in one-letter code: L-2-keto-3-deoxyarabonate dehydratase (309 aa).

Lys171 acts as the Schiff-base intermediate with substrate in catalysis.

This sequence belongs to the DapA family. In terms of assembly, homodimer.

It catalyses the reaction 2-dehydro-3-deoxy-L-arabinonate = 2,5-dioxopentanoate + H2O. Its function is as follows. Catalyzes the dehydration of L-2-keto-3-deoxyarabonate (L-KDA) to alpha-ketoglutaric semialdehyde (alphaKGSA). Is involved in a degradation pathway of L-arabinose that allows A.brasilense to grow on L-arabinose as a sole carbon source. The polypeptide is L-2-keto-3-deoxyarabonate dehydratase (araD) (Azospirillum brasilense).